Here is a 969-residue protein sequence, read N- to C-terminus: Integrator complex subunit 4 (969 aa).

8 HEAT repeats span residues 68–107 (AESV…TAGF), 147–185 (VSHR…VEAS), 192–230 (NAVA…RGLK), 231–265 (LQQA…SQLY), 279–315 (IRLV…LQVS), 371–407 (NLID…ARSS), 408–446 (APFA…NITL), and 448–486 (EDQL…CIQL). The span at 928-949 (RASNSTWGESTETVPSTESSTE) shows a compositional bias: low complexity. Positions 928–950 (RASNSTWGESTETVPSTESSTEG) are disordered.

This sequence belongs to the Integrator subunit 4 family. In terms of assembly, component of the Integrator complex, composed of core subunits INTS1, INTS2, INTS3, INTS4, INTS5, INTS6, INTS7, INTS8, INTS9/RC74, INTS10, INTS11/CPSF3L, INTS12, INTS13, INTS14 and INTS15. The core complex associates with protein phosphatase 2A subunits PPP2CA and PPP2R1A, to form the Integrator-PP2A (INTAC) complex. INTS4 is part of the RNA endonuclease subcomplex, composed of INTS4, INTS9, INTS11 and inositol hexakisphosphate (InsP6).

Its subcellular location is the nucleus. It is found in the cytoplasm. Its function is as follows. Component of the integrator complex, a multiprotein complex that terminates RNA polymerase II (Pol II) transcription in the promoter-proximal region of genes. The integrator complex provides a quality checkpoint during transcription elongation by driving premature transcription termination of transcripts that are unfavorably configured for transcriptional elongation: the complex terminates transcription by (1) catalyzing dephosphorylation of the C-terminal domain (CTD) of Pol II subunit POLR2A/RPB1 and SUPT5H/SPT5, (2) degrading the exiting nascent RNA transcript via endonuclease activity and (3) promoting the release of Pol II from bound DNA. The integrator complex is also involved in terminating the synthesis of non-coding Pol II transcripts, such as enhancer RNAs (eRNAs), small nuclear RNAs (snRNAs), telomerase RNAs and long non-coding RNAs (lncRNAs). This chain is Integrator complex subunit 4 (ints4), found in Xenopus laevis (African clawed frog).